Reading from the N-terminus, the 216-residue chain is Endo-1,4-beta-xylanase 1 (216 aa).

The signal sequence occupies residues 1-19 (MFLTSVVSLVVGAISCVSA). Residues 29–216 (QMTPRNSCYG…SSGSASITVS (188 aa)) enclose the GH11 domain. Catalysis depends on Glu112, which acts as the Nucleophile. The active-site Proton donor is the Glu203.

It belongs to the glycosyl hydrolase 11 (cellulase G) family.

It localises to the secreted. The enzyme catalyses Endohydrolysis of (1-&gt;4)-beta-D-xylosidic linkages in xylans.. The protein operates within glycan degradation; xylan degradation. In terms of biological role, endo-1,4-beta-xylanase involved in the hydrolysis of xylan, a major structural heterogeneous polysaccharide found in plant biomass representing the second most abundant polysaccharide in the biosphere, after cellulose. This is Endo-1,4-beta-xylanase 1 (xyl1) from Claviceps purpurea (Ergot fungus).